Here is a 253-residue protein sequence, read N- to C-terminus: Imidazole glycerol phosphate synthase subunit HisF (253 aa).

Catalysis depends on residues D11 and D130.

It belongs to the HisA/HisF family. Heterodimer of HisH and HisF.

The protein resides in the cytoplasm. It catalyses the reaction 5-[(5-phospho-1-deoxy-D-ribulos-1-ylimino)methylamino]-1-(5-phospho-beta-D-ribosyl)imidazole-4-carboxamide + L-glutamine = D-erythro-1-(imidazol-4-yl)glycerol 3-phosphate + 5-amino-1-(5-phospho-beta-D-ribosyl)imidazole-4-carboxamide + L-glutamate + H(+). It functions in the pathway amino-acid biosynthesis; L-histidine biosynthesis; L-histidine from 5-phospho-alpha-D-ribose 1-diphosphate: step 5/9. Its function is as follows. IGPS catalyzes the conversion of PRFAR and glutamine to IGP, AICAR and glutamate. The HisF subunit catalyzes the cyclization activity that produces IGP and AICAR from PRFAR using the ammonia provided by the HisH subunit. This is Imidazole glycerol phosphate synthase subunit HisF from Desulfitobacterium hafniense (strain DSM 10664 / DCB-2).